The sequence spans 210 residues: LexA repressor (210 aa).

A DNA-binding region (H-T-H motif) is located at residues 29–49 (VREIGEAVDLSSTSTVHGHIS). Active-site for autocatalytic cleavage activity residues include serine 130 and lysine 168.

This sequence belongs to the peptidase S24 family. As to quaternary structure, homodimer.

The enzyme catalyses Hydrolysis of Ala-|-Gly bond in repressor LexA.. Represses a number of genes involved in the response to DNA damage (SOS response), including recA and lexA. In the presence of single-stranded DNA, RecA interacts with LexA causing an autocatalytic cleavage which disrupts the DNA-binding part of LexA, leading to derepression of the SOS regulon and eventually DNA repair. The chain is LexA repressor from Lactiplantibacillus plantarum (strain ATCC BAA-793 / NCIMB 8826 / WCFS1) (Lactobacillus plantarum).